A 235-amino-acid chain; its full sequence is Histidine/lysine/arginine/ornithine transport system permease protein HisM (235 aa).

The Periplasmic segment spans residues 1–26 (MIEIIQEYWKSLLWTDGYRFTGVAIT). The region spanning 23–221 (VAITLWLLIS…LISYVLISLF (199 aa)) is the ABC transmembrane type-1 domain. The chain crosses the membrane as a helical span at residues 27–47 (LWLLISSVVMGGLLAVILAVG). The Cytoplasmic portion of the chain corresponds to 48 to 58 (RVSSNKFIRFP). Residues 59–79 (IWLFTYIFRGTPLYVQLLVFY) traverse the membrane as a helical segment. The Periplasmic portion of the chain corresponds to 80-104 (SGMYTLEIVKGTDLLNAFFRSGLNC). A helical membrane pass occupies residues 105 to 125 (TVLALTLNTCAYTTEIFAGAI). Over 126–157 (RSVPHGEIEAARAYGFSSFKMYRCIILPSALR) the chain is Cytoplasmic. A helical membrane pass occupies residues 158 to 178 (IALPAYSNEVILMLHSTALAF). Topologically, residues 179 to 199 (TATVPDLLKIARDINSATYQP) are periplasmic. A helical membrane pass occupies residues 200 to 220 (FTAFGIAAVLYLLISYVLISL). Topologically, residues 221-235 (FRRAERRWLQHVSSK) are cytoplasmic.

Belongs to the binding-protein-dependent transport system permease family. HisMQ subfamily. In terms of assembly, the HisPMQJ complex is composed of two ATP-binding proteins (HisP), two transmembrane proteins (HisM and HisQ) and a solute-binding protein (HisJ). The HisPMQ-ArgT complex is composed of two ATP-binding proteins (HisP), two transmembrane proteins (HisM and HisQ) and a solute-binding protein (ArgT).

The protein resides in the cell inner membrane. Part of the ABC transporter complex HisPMQJ involved in histidine transport. Is also part of the ABC transporter complex HisPMQ-ArgT involved in lysine/arginine/ornithine transport. Probably responsible for the translocation of the substrate across the membrane. This is Histidine/lysine/arginine/ornithine transport system permease protein HisM (hisM) from Salmonella typhi.